The sequence spans 371 residues: Cytochrome b (371 aa).

The next 4 helical transmembrane spans lie at 25–45 (FGSMLLTCLALQVLTGFFLAV), 69–90 (WMMQNLHAIGASMFFICIYIHI), 105–125 (WMSGITLLITLMATAFFGYVL), and 170–190 (FFALHFILPFEIISLSSLHII). Heme b is bound by residues His75 and His89. Residues His174 and His188 each contribute to the heme b site. Residue His193 coordinates a ubiquinone. The next 4 membrane-spanning stretches (helical) occupy residues 218-238 (HKDLLLLTLMILLLFITMSFF), 280-300 (LGGALALVTSIMILFTIPFTH), 312-332 (LSQLMFWTLVSTFITITWAAT), and 339-358 (FIIISQATSLLYFTFFLSFP).

It belongs to the cytochrome b family. In terms of assembly, the cytochrome bc1 complex contains 3 respiratory subunits (MT-CYB, CYC1 and UQCRFS1), 2 core proteins (UQCRC1 and UQCRC2) and probably 6 low-molecular weight proteins. It depends on heme b as a cofactor.

The protein resides in the mitochondrion inner membrane. Functionally, component of the ubiquinol-cytochrome c reductase complex (complex III or cytochrome b-c1 complex) that is part of the mitochondrial respiratory chain. The b-c1 complex mediates electron transfer from ubiquinol to cytochrome c. Contributes to the generation of a proton gradient across the mitochondrial membrane that is then used for ATP synthesis. This is Cytochrome b (MT-CYB) from Apodora papuana (Papuan olive python).